Here is a 220-residue protein sequence, read N- to C-terminus: Deoxyribose-phosphate aldolase (220 aa).

The active-site Proton donor/acceptor is Asp92. Lys157 functions as the Schiff-base intermediate with acetaldehyde in the catalytic mechanism. The Proton donor/acceptor role is filled by Lys186.

This sequence belongs to the DeoC/FbaB aldolase family. DeoC type 1 subfamily.

It is found in the cytoplasm. It catalyses the reaction 2-deoxy-D-ribose 5-phosphate = D-glyceraldehyde 3-phosphate + acetaldehyde. It participates in carbohydrate degradation; 2-deoxy-D-ribose 1-phosphate degradation; D-glyceraldehyde 3-phosphate and acetaldehyde from 2-deoxy-alpha-D-ribose 1-phosphate: step 2/2. In terms of biological role, catalyzes a reversible aldol reaction between acetaldehyde and D-glyceraldehyde 3-phosphate to generate 2-deoxy-D-ribose 5-phosphate. The sequence is that of Deoxyribose-phosphate aldolase from Caldicellulosiruptor saccharolyticus (strain ATCC 43494 / DSM 8903 / Tp8T 6331).